Reading from the N-terminus, the 280-residue chain is Pantothenate synthetase (280 aa).

30-37 serves as a coordination point for ATP; sequence MGYLHEGH. Residue His-37 is the Proton donor of the active site. Position 61 (Gln-61) interacts with (R)-pantoate. Gln-61 contacts beta-alanine. Residue 147 to 150 participates in ATP binding; it reads GQKD. Gln-153 is a (R)-pantoate binding site. ATP contacts are provided by residues Val-176 and 184-187; that span reads MSSR.

This sequence belongs to the pantothenate synthetase family. In terms of assembly, homodimer.

It localises to the cytoplasm. The catalysed reaction is (R)-pantoate + beta-alanine + ATP = (R)-pantothenate + AMP + diphosphate + H(+). The protein operates within cofactor biosynthesis; (R)-pantothenate biosynthesis; (R)-pantothenate from (R)-pantoate and beta-alanine: step 1/1. Functionally, catalyzes the condensation of pantoate with beta-alanine in an ATP-dependent reaction via a pantoyl-adenylate intermediate. The polypeptide is Pantothenate synthetase (Thermotoga petrophila (strain ATCC BAA-488 / DSM 13995 / JCM 10881 / RKU-1)).